The following is a 121-amino-acid chain: Large ribosomal subunit protein bL12 (121 aa).

This sequence belongs to the bacterial ribosomal protein bL12 family. As to quaternary structure, homodimer. Part of the ribosomal stalk of the 50S ribosomal subunit. Forms a multimeric L10(L12)X complex, where L10 forms an elongated spine to which 2 to 4 L12 dimers bind in a sequential fashion. Binds GTP-bound translation factors.

Forms part of the ribosomal stalk which helps the ribosome interact with GTP-bound translation factors. Is thus essential for accurate translation. The protein is Large ribosomal subunit protein bL12 of Shewanella pealeana (strain ATCC 700345 / ANG-SQ1).